The sequence spans 271 residues: Formamidopyrimidine-DNA glycosylase (271 aa).

P2 serves as the catalytic Schiff-base intermediate with DNA. Residue E3 is the Proton donor of the active site. The active-site Proton donor; for beta-elimination activity is K57. Positions 90, 109, and 150 each coordinate DNA. The FPG-type zinc-finger motif lies at 235–269; sequence LVYGNKDKPCPKCGGKIESLIIGQRNSFFCPKCQK. R259 acts as the Proton donor; for delta-elimination activity in catalysis.

It belongs to the FPG family. As to quaternary structure, monomer. The cofactor is Zn(2+).

The catalysed reaction is Hydrolysis of DNA containing ring-opened 7-methylguanine residues, releasing 2,6-diamino-4-hydroxy-5-(N-methyl)formamidopyrimidine.. It catalyses the reaction 2'-deoxyribonucleotide-(2'-deoxyribose 5'-phosphate)-2'-deoxyribonucleotide-DNA = a 3'-end 2'-deoxyribonucleotide-(2,3-dehydro-2,3-deoxyribose 5'-phosphate)-DNA + a 5'-end 5'-phospho-2'-deoxyribonucleoside-DNA + H(+). In terms of biological role, involved in base excision repair of DNA damaged by oxidation or by mutagenic agents. Acts as a DNA glycosylase that recognizes and removes damaged bases. Has a preference for oxidized purines, such as 7,8-dihydro-8-oxoguanine (8-oxoG). Has AP (apurinic/apyrimidinic) lyase activity and introduces nicks in the DNA strand. Cleaves the DNA backbone by beta-delta elimination to generate a single-strand break at the site of the removed base with both 3'- and 5'-phosphates. This is Formamidopyrimidine-DNA glycosylase from Haemophilus influenzae (strain PittEE).